A 420-amino-acid polypeptide reads, in one-letter code: Sodium/proton antiporter 2 (420 aa).

The next 11 helical transmembrane spans lie at 25 to 45 (IALLMAVSLWVVRSIETSVEI), 60 to 80 (IVFYMLGAMTIVEIIDAHQGF), 94 to 114 (ILLWVIGFATFFLSSVLDNLT), 136 to 156 (LGAVVVIAANAGGAWTPIGDV), 173 to 193 (IKNLFLPSAISLVVPLALMSL), 221 to 241 (LVFGVGFGALLFVPLFKSLTG), 242 to 262 (LPPYMGILLGLGVIWILTDVI), 285 to 305 (GALFFLGILLSMSSLDAAGIL), 321 to 341 (LIASIIGVVSAIIDNVPLVAA), 363 to 383 (FCAGTGGSMLITGSAAGVIFM), and 400 to 420 (FAFAGFTAGIMTYLAVHNFPL).

Belongs to the NhaD Na(+)/H(+) (TC 2.A.62) antiporter family.

Its subcellular location is the membrane. Its function is as follows. Na(+)/H(+) antiporter that extrudes sodium in exchange for external protons. The chain is Sodium/proton antiporter 2 from Arabidopsis thaliana (Mouse-ear cress).